The sequence spans 239 residues: Fatty acid metabolism regulator protein (239 aa).

Positions 6 to 74 (QSPAGFAEEY…HGKPTKVNNF (69 aa)) constitute an HTH gntR-type domain. Positions 34–53 (ERELSELIGVTRTTLREVLQ) form a DNA-binding region, H-T-H motif.

Homodimer.

It localises to the cytoplasm. Its function is as follows. Multifunctional regulator of fatty acid metabolism. The chain is Fatty acid metabolism regulator protein from Proteus mirabilis (strain HI4320).